The following is a 1027-amino-acid chain: Kinesin heavy chain isoform 5A (1027 aa).

Position 2 is an N-acetylalanine (Ala-2). A Kinesin motor domain is found at 9–327 (SIKVLCRFRP…LMFGQRAKTI (319 aa)). 86–93 (GQTSSGKT) serves as a coordination point for ATP. Residues 174 to 315 (VSSPEEILDV…PSSYNDAETK (142 aa)) form a microtubule-binding region. The tract at residues 271–361 (EGTKSYVPYR…KTKAQKETIA (91 aa)) is necessary for interaction with ZFYVE27. A coiled-coil region spans residues 331-905 (ASVNLELTAE…EVDRIKEAVR (575 aa)). The segment at 353–1027 (TKAQKETIAK…FPLHQETAAS (675 aa)) is interaction with BICD2. Phosphothreonine is present on Thr-397. Residues 906 to 936 (YKSSGKRGHSAQIAKPVRPGHYPASSPTNPY) are disordered. The segment at 907-1027 (KSSGKRGHSA…FPLHQETAAS (121 aa)) is globular.

Belongs to the TRAFAC class myosin-kinesin ATPase superfamily. Kinesin family. Kinesin subfamily. Oligomer composed of two heavy chains and two light chains. Interacts with GRIP1. Interacts with FMR1 (via C-terminus); this interaction is increased in a mGluR-dependent manner. Interacts with BORCS5. Interacts with ZFYVE27. Interacts with VAPA, VAPB, SURF4, RAB11A (GDP-bound form), RAB11B (GDP-bound form) and RTN3 in a ZFYVE27-dependent manner. Interacts with BICD2. Interacts with DTNB. Expressed in brain.

The protein localises to the cytoplasm. Its subcellular location is the perinuclear region. It is found in the cytoskeleton. It localises to the perikaryon. It catalyses the reaction ATP + H2O + a kinesin associated with a microtubule at position (n) = ADP + phosphate a kinesin associated with a microtubule at position (n+1, toward the plus end).. Microtubule-dependent motor required for slow axonal transport of neurofilament proteins (NFH, NFM and NFL). Can induce formation of neurite-like membrane protrusions in non-neuronal cells in a ZFYVE27-dependent manner. The ZFYVE27-KIF5A complex contributes to the vesicular transport of VAPA, VAPB, SURF4, RAB11A, RAB11B and RTN3 proteins in neurons. Required for anterograde axonal transportation of MAPK8IP3/JIP3 which is essential for MAPK8IP3/JIP3 function in axon elongation. This chain is Kinesin heavy chain isoform 5A, found in Rattus norvegicus (Rat).